Here is a 344-residue protein sequence, read N- to C-terminus: MIEINQVNKVFYQGSKEIHALKDINLHIAEGTIFGVIGSSGAGKSTLIRCVNMLEAPTSGSIVVDGVDLTKLSKKQLSETRRNIGMIFQHFNLLSSRTVFDNVALPLELAGKDKEQIQSKVTELLKLVGLADKHESYPANLSGGQKQRVAIARALASDPKVLLCDEATSALDPATTQSILELLKEINRKLKITILLITHEMDVVKSICHEVAIIGGGELVEKGTVGEIFAHPKTELAHDFIRSTLDLSIPEDYQARLQPTRVAGSYPLVRLEFTGATVDAPLVSQISRKYNIDISILSSDLDYAGGVKFGMMVAELFGNEEDDNAAIEYLREHNVKVEVLGYVL.

The ABC transporter domain maps to Ile2–Ile241. Gly38–Ser45 lines the ATP pocket.

This sequence belongs to the ABC transporter superfamily. Methionine importer (TC 3.A.1.24) family. As to quaternary structure, the complex is composed of two ATP-binding proteins (MetN), two transmembrane proteins (MetI) and a solute-binding protein (MetQ).

Its subcellular location is the cell inner membrane. It catalyses the reaction L-methionine(out) + ATP + H2O = L-methionine(in) + ADP + phosphate + H(+). The catalysed reaction is D-methionine(out) + ATP + H2O = D-methionine(in) + ADP + phosphate + H(+). Part of the ABC transporter complex MetNIQ involved in methionine import. Responsible for energy coupling to the transport system. The sequence is that of Methionine import ATP-binding protein MetN from Vibrio vulnificus (strain YJ016).